The chain runs to 462 residues: Integrator complex subunit 12 (462 aa).

The tract at residues 39–132 (LARGIDSSYR…PETRSSPITV (94 aa)) is disordered. Residues 59 to 86 (ISSTKTVSVKQEPKTSSSLPSGNNNGKV) show a composition bias toward polar residues. Lys-68 is covalently cross-linked (Glycyl lysine isopeptide (Lys-Gly) (interchain with G-Cter in SUMO2)). Residues 88 to 125 (TTEKVKKEGEKRPADKMKSDITEGADVPKKPRLEKPET) show a composition bias toward basic and acidic residues. Ser-128 carries the phosphoserine modification. A PHD-type zinc finger spans residues 159–215 (GLACVVCRQMTVASGNQLVECQECHNLYHQDCHKPQVTDKEVTDPRLVWYCARCTRQ). A Glycyl lysine isopeptide (Lys-Gly) (interchain with G-Cter in SUMO2) cross-link involves residue Lys-254. A compositionally biased stretch (polar residues) spans 305–328 (PSTAKLSSAAQNNSGKPATSSANQ). The interval 305 to 462 (PSTAKLSSAA…KKAAQKKLKK (158 aa)) is disordered. Low complexity-rich tracts occupy residues 347–358 (KIGSSNSTSPTV) and 382–431 (VSKV…PSAS). Over residues 434–443 (GPTSQESQLN) the composition is skewed to polar residues. Residues 449-462 (QMVKKKAAQKKLKK) show a composition bias toward basic residues.

Belongs to the Integrator subunit 12 family. In terms of assembly, component of the Integrator complex, composed of core subunits INTS1, INTS2, INTS3, INTS4, INTS5, INTS6, INTS7, INTS8, INTS9/RC74, INTS10, INTS11/CPSF3L, INTS12, INTS13, INTS14 and INTS15. The core complex associates with protein phosphatase 2A subunits PPP2CA and PPP2R1A, to form the Integrator-PP2A (INTAC) complex. In terms of processing, dephosphorylated at Ser-128 by the PNUTS-PP1 complex, promoting RNA polymerase II transcription pause-release.

It localises to the nucleus. Functionally, component of the integrator complex, a multiprotein complex that terminates RNA polymerase II (Pol II) transcription in the promoter-proximal region of genes. The integrator complex provides a quality checkpoint during transcription elongation by driving premature transcription termination of transcripts that are unfavorably configured for transcriptional elongation: the complex terminates transcription by (1) catalyzing dephosphorylation of the C-terminal domain (CTD) of Pol II subunit POLR2A/RPB1 and SUPT5H/SPT5, (2) degrading the exiting nascent RNA transcript via endonuclease activity and (3) promoting the release of Pol II from bound DNA. The integrator complex is also involved in terminating the synthesis of non-coding Pol II transcripts, such as enhancer RNAs (eRNAs), small nuclear RNAs (snRNAs), telomerase RNAs and long non-coding RNAs (lncRNAs). Mediates recruitment of cytoplasmic dynein to the nuclear envelope, probably as component of the integrator complex. This chain is Integrator complex subunit 12 (INTS12), found in Bos taurus (Bovine).